An 881-amino-acid polypeptide reads, in one-letter code: Putative outer membrane usher protein YfcU (881 aa).

A signal peptide spans 1–29; the sequence is MPDHSLFRLRILPWCIALAMSGSYSSVWA.

Belongs to the fimbrial export usher family.

The protein resides in the cell outer membrane. Functionally, part of the yfcOPQRSUV fimbrial operon. Could contribute to adhesion to various surfaces in specific environmental niches. Increases adhesion to eukaryotic T24 bladder epithelial cells in the absence of fim genes. Probably involved in the export and assembly of fimbrial subunits across the outer membrane. This Escherichia coli (strain K12) protein is Putative outer membrane usher protein YfcU (yfcU).